Reading from the N-terminus, the 374-residue chain is Fasciclin-like arabinogalactan protein CTB11 (374 aa).

The signal sequence occupies residues 1 to 18; that stretch reads MHFPALAVAGCLLSRATA. 2 consecutive FAS1 domains span residues 19 to 171 and 173 to 302; these read QSLD…DANM and LPHN…DGAL. Asn-52, Asn-72, Asn-120, Asn-132, and Asn-176 each carry an N-linked (GlcNAc...) asparagine glycan. A helical transmembrane segment spans residues 328-348; the sequence is ILASHQLTLLAVLAMALVSIL.

The protein belongs to the fasciclin-like AGP family.

The protein resides in the membrane. Its pathway is mycotoxin biosynthesis. Functionally, fasciclin-like arabinogalactan protein; part of the gene cluster that mediates the biosynthesis of cercosporin, a light-activated, non-host-selective toxin. The perylenequinone chromophore of cercosporin absorbs light energy to attain an electronically-activated triplet state and produces active oxygen species such as the hydroxyl radical, superoxide, hydrogen peroxide or singlet oxygen upon reaction with oxygen molecules. These reactive oxygen species cause damage to various cellular components including lipids, proteins and nucleic acids. The first step of cercosporin biosynthesis is performed by the polyketide synthase CTB1 which catalyzes the formation of nor-toralactone. The starter unit acyltransferase (SAT) domain of CTB1 initiates polyketide extension by the selective utilization of acetyl-CoA, which is elongated to the heptaketide in the beta-ketoacyl synthase (KS) domain by successive condensations with six malonyl units introduced by the malonyl acyltransferase (MAT) domain. The product template (PT) domain catalyzes C4-C9 and C2-C11 aldol cyclizations and dehydrations to a trihydroxynaphthalene, which is thought to be delivered to the thioesterase (TE) domain for product release. The bifunctional enzyme CTB3 then methylates nor-toralactone to toralactone before conducting an unusual oxidative aromatic ring opening. The O-methyltransferase CTB2 further methylates the nascent OH-6 of the CBT3 product, blocking further oxidation at this site before the reductase CTB6 reduces the 2-oxopropyl ketone at position C7, giving naphthalene. The FAD-dependent monooxygenase CTB5 in concert with the multicopper oxidase CTB12 are responsible for homodimerization of naphthalene with CTB7 installing the dioxepine moiety, finally producing cercosporin. The fasciclin domain-containing protein CTB11 might act with CTB5 and CTB12 whereas the roles of CTB9 and CTB10 have still to be elucidated. The polypeptide is Fasciclin-like arabinogalactan protein CTB11 (Cercospora beticola (Sugarbeet leaf spot fungus)).